The following is a 121-amino-acid chain: Small ribosomal subunit protein uS13 (121 aa).

The interval 94-121 is disordered; that stretch reads GLPMRGQRTRTNARTRKGPRKGAAALKK.

The protein belongs to the universal ribosomal protein uS13 family. In terms of assembly, part of the 30S ribosomal subunit. Forms a loose heterodimer with protein S19. Forms two bridges to the 50S subunit in the 70S ribosome.

Functionally, located at the top of the head of the 30S subunit, it contacts several helices of the 16S rRNA. In the 70S ribosome it contacts the 23S rRNA (bridge B1a) and protein L5 of the 50S subunit (bridge B1b), connecting the 2 subunits; these bridges are implicated in subunit movement. Contacts the tRNAs in the A and P-sites. This Delftia acidovorans (strain DSM 14801 / SPH-1) protein is Small ribosomal subunit protein uS13.